The following is a 347-amino-acid chain: Haptoglobin (347 aa).

The first 18 residues, Met1 to Ala18, serve as a signal peptide directing secretion. Positions Asp31–Ala88 constitute a Sushi domain. 4 disulfide bridges follow: Cys52–Cys86, Cys90–Cys207, Cys250–Cys281, and Cys292–Cys322. The 245-residue stretch at Ile103 to Asn347 folds into the Peptidase S1 domain. N-linked (GlcNAc...) asparagine glycans are attached at residues Asn125, Asn148, Asn152, and Asn182. The interaction with CD163 stretch occupies residues Val259–Thr264.

This sequence belongs to the peptidase S1 family. As to quaternary structure, tetramer of two alpha and two beta chains; disulfide-linked. The hemoglobin/haptoglobin complex is composed of a haptoglobin dimer bound to two hemoglobin alpha-beta dimers. Interacts with CD163. Interacts with ERGIC3.

The protein resides in the secreted. Its function is as follows. As a result of hemolysis, hemoglobin is found to accumulate in the kidney and is secreted in the urine. Haptoglobin captures, and combines with free plasma hemoglobin to allow hepatic recycling of heme iron and to prevent kidney damage. Haptoglobin also acts as an antioxidant, has antibacterial activity and plays a role in modulating many aspects of the acute phase response. Hemoglobin/haptoglobin complexes are rapidly cleared by the macrophage CD163 scavenger receptor expressed on the surface of liver Kupfer cells through an endocytic lysosomal degradation pathway. This Pongo abelii (Sumatran orangutan) protein is Haptoglobin (HP).